A 100-amino-acid polypeptide reads, in one-letter code: Large ribosomal subunit protein uL23 (100 aa).

This sequence belongs to the universal ribosomal protein uL23 family. In terms of assembly, part of the 50S ribosomal subunit. Contacts protein L29, and trigger factor when it is bound to the ribosome.

In terms of biological role, one of the early assembly proteins it binds 23S rRNA. One of the proteins that surrounds the polypeptide exit tunnel on the outside of the ribosome. Forms the main docking site for trigger factor binding to the ribosome. The chain is Large ribosomal subunit protein uL23 from Colwellia psychrerythraea (strain 34H / ATCC BAA-681) (Vibrio psychroerythus).